The following is a 676-amino-acid chain: Pescadillo homolog (676 aa).

Residues 298 to 327 (IAAMADDEDEQEVEMAEADAEDDDEEENTE) are a coiled coil. Disordered regions lie at residues 298 to 338 (IAAM…TAPD), 413 to 439 (PLANGASAAGAEDAATPQVQWPHSTKP), 478 to 502 (VKPKKGEYDPNLPLAAQQPDGEAEA), and 515 to 676 (EVDD…AERA). The span at 302–327 (ADDEDEQEVEMAEADAEDDDEEENTE) shows a compositional bias: acidic residues. The 116-residue stretch at 351-466 (EIASLFAPFT…KLLRPDLYAP (116 aa)) folds into the BRCT domain. A compositionally biased stretch (low complexity) spans 415 to 427 (ANGASAAGAEDAA). 3 stretches are compositionally biased toward acidic residues: residues 515 to 524 (EVDDDEDMDA), 539 to 557 (DVADSDDDDEDDSESDAEG), and 565 to 577 (FDDESEAESDISE). Residues 568–676 (ESEAESDISE…EKAKAAAERA (109 aa)) adopt a coiled-coil conformation. 4 stretches are compositionally biased toward basic and acidic residues: residues 579-608 (EAARLQHQRELEAEATGKKLDVKAPTKKEQ), 620-631 (KRAEEEERDRQK), 643-659 (KRIEYGENKRDTESENL), and 666-676 (LEKAKAAAERA).

Belongs to the pescadillo family. As to quaternary structure, component of the NOP7 complex, composed of ERB1, NOP7 and YTM1. The complex is held together by ERB1, which interacts with NOP7 via its N-terminal domain and with YTM1 via a high-affinity interaction between the seven-bladed beta-propeller domains of the 2 proteins. The NOP7 complex associates with the 66S pre-ribosome.

The protein localises to the nucleus. The protein resides in the nucleolus. It is found in the nucleoplasm. Its function is as follows. Component of the NOP7 complex, which is required for maturation of the 25S and 5.8S ribosomal RNAs and formation of the 60S ribosome. The polypeptide is Pescadillo homolog (Phaeosphaeria nodorum (strain SN15 / ATCC MYA-4574 / FGSC 10173) (Glume blotch fungus)).